Here is a 157-residue protein sequence, read N- to C-terminus: Protein MGF 110-13L (157 aa).

Transmembrane regions (helical) follow at residues 14 to 34 (QYCL…CALC) and 39 to 59 (LSTT…AQPV).

It belongs to the asfivirus MGF 110 family.

The protein localises to the host membrane. In terms of biological role, plays a role in virus cell tropism, and may be required for efficient virus replication in macrophages. This chain is Protein MGF 110-13L, found in African swine fever virus (isolate Tick/Malawi/Lil 20-1/1983) (ASFV).